Reading from the N-terminus, the 931-residue chain is Protocadherin gamma-A4 (931 aa).

A signal peptide spans 1 to 28 (MAAPPARPDHTRLLHICLLLGVLVEIRA). 6 Cadherin domains span residues 29-133 (EQIR…PPSF), 134-242 (GTEQ…APVF), 243-347 (TQPE…APEV), 348-452 (TVTS…PPTF), 453-567 (PHAS…YPTF), and 570-682 (DDST…KPSA). The Extracellular portion of the chain corresponds to 29–692 (EQIRYSVFEE…DPDDSGLTLY (664 aa)). Residues N419 and N545 are each glycosylated (N-linked (GlcNAc...) asparagine). A helical membrane pass occupies residues 693–713 (LVVSVAAVSCVFLAFVTVLLA). At 714-931 (LKLRRWHKSR…KKKSGKKEKK (218 aa)) the chain is on the cytoplasmic side. Disordered stretches follow at residues 801–840 (KGDPNLQQAPPNTDWRFSQAQRPGTSGSQNGDDTGTWPNN) and 901–931 (ATLTNAAGKRDGKAPAGGNGNKKKSGKKEKK). A compositionally biased stretch (polar residues) spans 805 to 840 (NLQQAPPNTDWRFSQAQRPGTSGSQNGDDTGTWPNN). Basic residues predominate over residues 921–931 (NKKKSGKKEKK).

The protein localises to the cell membrane. Its function is as follows. Potential calcium-dependent cell-adhesion protein. May be involved in the establishment and maintenance of specific neuronal connections in the brain. The polypeptide is Protocadherin gamma-A4 (PCDHGA4) (Pan troglodytes (Chimpanzee)).